The chain runs to 303 residues: Sulfate adenylyltransferase subunit 2 (303 aa).

This sequence belongs to the PAPS reductase family. CysD subfamily. In terms of assembly, heterodimer composed of CysD, the smaller subunit, and CysN.

The enzyme catalyses sulfate + ATP + H(+) = adenosine 5'-phosphosulfate + diphosphate. It functions in the pathway sulfur metabolism; hydrogen sulfide biosynthesis; sulfite from sulfate: step 1/3. In terms of biological role, with CysN forms the ATP sulfurylase (ATPS) that catalyzes the adenylation of sulfate producing adenosine 5'-phosphosulfate (APS) and diphosphate, the first enzymatic step in sulfur assimilation pathway. APS synthesis involves the formation of a high-energy phosphoric-sulfuric acid anhydride bond driven by GTP hydrolysis by CysN coupled to ATP hydrolysis by CysD. This Sulfurimonas denitrificans (strain ATCC 33889 / DSM 1251) (Thiomicrospira denitrificans (strain ATCC 33889 / DSM 1251)) protein is Sulfate adenylyltransferase subunit 2.